Here is a 76-residue protein sequence, read N- to C-terminus: DNA-directed RNA polymerase subunit omega (76 aa).

This sequence belongs to the RNA polymerase subunit omega family. The RNAP catalytic core consists of 2 alpha, 1 beta, 1 beta' and 1 omega subunit. When a sigma factor is associated with the core the holoenzyme is formed, which can initiate transcription.

It catalyses the reaction RNA(n) + a ribonucleoside 5'-triphosphate = RNA(n+1) + diphosphate. Its function is as follows. Promotes RNA polymerase assembly. Latches the N- and C-terminal regions of the beta' subunit thereby facilitating its interaction with the beta and alpha subunits. The sequence is that of DNA-directed RNA polymerase subunit omega from Staphylococcus carnosus (strain TM300).